A 451-amino-acid chain; its full sequence is Tubulin alpha chain (451 aa).

Gln11 provides a ligand contact to GTP. Lys40 bears the N6-acetyllysine mark. GTP-binding residues include Glu71, Gly144, Thr145, Thr179, Asn206, and Asn228. Glu71 contacts Mg(2+). Residue Glu254 is part of the active site.

Belongs to the tubulin family. As to quaternary structure, dimer of alpha and beta chains. A typical microtubule is a hollow water-filled tube with an outer diameter of 25 nm and an inner diameter of 15 nM. Alpha-beta heterodimers associate head-to-tail to form protofilaments running lengthwise along the microtubule wall with the beta-tubulin subunit facing the microtubule plus end conferring a structural polarity. Microtubules usually have 13 protofilaments but different protofilament numbers can be found in some organisms and specialized cells. Mg(2+) is required as a cofactor. Post-translationally, undergoes a tyrosination/detyrosination cycle, the cyclic removal and re-addition of a C-terminal tyrosine residue by the enzymes tubulin tyrosine carboxypeptidase (TTCP) and tubulin tyrosine ligase (TTL), respectively. Acetylation of alpha chains at Lys-40 stabilizes microtubules and affects affinity and processivity of microtubule motors. This modification has a role in multiple cellular functions, ranging from cell motility, cell cycle progression or cell differentiation to intracellular trafficking and signaling.

It is found in the cytoplasm. The protein resides in the cytoskeleton. The catalysed reaction is GTP + H2O = GDP + phosphate + H(+). In terms of biological role, tubulin is the major constituent of microtubules, a cylinder consisting of laterally associated linear protofilaments composed of alpha- and beta-tubulin heterodimers. Microtubules grow by the addition of GTP-tubulin dimers to the microtubule end, where a stabilizing cap forms. Below the cap, tubulin dimers are in GDP-bound state, owing to GTPase activity of alpha-tubulin. The chain is Tubulin alpha chain (TUBA) from Triticum aestivum (Wheat).